Consider the following 237-residue polypeptide: DNA repair protein RecO (237 aa).

The protein belongs to the RecO family.

Its function is as follows. Involved in DNA repair and RecF pathway recombination. The protein is DNA repair protein RecO of Rickettsia rickettsii (strain Iowa).